The sequence spans 670 residues: Mannosyl-oligosaccharide alpha-1,2-mannosidase IA (670 aa).

The Cytoplasmic portion of the chain corresponds to 1–30; sequence MTGILPTYQRFVNGVPVPSISRRSFRLREK. The helical; Signal-anchor for type II membrane protein transmembrane segment at 31–51 threads the bilayer; it reads YLIVSVLLTFGIVWLGALFYL. The Lumenal portion of the chain corresponds to 52–670; sequence PEFKSSNSVN…EPAHAQNNRI (619 aa). N-linked (GlcNAc...) asparagine glycosylation occurs at Asn61. The segment at 135-177 is disordered; that stretch reads DVAPSVSSSRGPSKPPVDAIEEPAVGNNAANKDVSPSGPKAES. Cys480 and Cys512 form a disulfide bridge. Glu526 (proton donor) is an active-site residue. Residue Thr637 participates in Ca(2+) binding.

It belongs to the glycosyl hydrolase 47 family. It depends on Ca(2+) as a cofactor. N-glycosylated. Contains high mannose-type oligosaccharides.

It is found in the golgi apparatus membrane. It carries out the reaction N(4)-(alpha-D-Man-(1-&gt;2)-alpha-D-Man-(1-&gt;2)-alpha-D-Man-(1-&gt;3)-[alpha-D-Man-(1-&gt;2)-alpha-D-Man-(1-&gt;3)-[alpha-D-Man-(1-&gt;2)-alpha-D-Man-(1-&gt;6)]-alpha-D-Man-(1-&gt;6)]-beta-D-Man-(1-&gt;4)-beta-D-GlcNAc-(1-&gt;4)-beta-D-GlcNAc)-L-asparaginyl-[protein] (N-glucan mannose isomer 9A1,2,3B1,2,3) + 4 H2O = N(4)-(alpha-D-Man-(1-&gt;3)-[alpha-D-Man-(1-&gt;3)-[alpha-D-Man-(1-&gt;6)]-alpha-D-Man-(1-&gt;6)]-beta-D-Man-(1-&gt;4)-beta-D-GlcNAc-(1-&gt;4)-beta-D-GlcNAc)-L-asparaginyl-[protein] (N-glucan mannose isomer 5A1,2) + 4 beta-D-mannose. It catalyses the reaction N(4)-(alpha-D-Man-(1-&gt;2)-alpha-D-Man-(1-&gt;2)-alpha-D-Man-(1-&gt;3)-[alpha-D-Man-(1-&gt;3)-[alpha-D-Man-(1-&gt;2)-alpha-D-Man-(1-&gt;6)]-alpha-D-Man-(1-&gt;6)]-beta-D-Man-(1-&gt;4)-beta-D-GlcNAc-(1-&gt;4)-beta-D-GlcNAc)-L-asparaginyl-[protein] (N-glucan mannose isomer 8A1,2,3B1,3) + 3 H2O = N(4)-(alpha-D-Man-(1-&gt;3)-[alpha-D-Man-(1-&gt;3)-[alpha-D-Man-(1-&gt;6)]-alpha-D-Man-(1-&gt;6)]-beta-D-Man-(1-&gt;4)-beta-D-GlcNAc-(1-&gt;4)-beta-D-GlcNAc)-L-asparaginyl-[protein] (N-glucan mannose isomer 5A1,2) + 3 beta-D-mannose. Its pathway is protein modification; protein glycosylation. Its activity is regulated as follows. Strongly inhibited by 1-deoxymannojirimycin, an inhibitor of class I alpha-mannosidases, and by EDTA. EDTA inhibition is reversed by the addition of calcium, but not of magnesium. Its function is as follows. Involved in the maturation of Asn-linked oligosaccharides. Converts Man(9)GlcNAc(2) to Man(5)GlcNAc(2) primarily through the Man(7)GlcNAc(2) isomer C processing intermediate. The polypeptide is Mannosyl-oligosaccharide alpha-1,2-mannosidase IA (Spodoptera frugiperda (Fall armyworm)).